The sequence spans 336 residues: Izumo sperm-egg fusion protein 1 (336 aa).

The N-terminal stretch at 1–16 (MTLPILLGWFLTLCSS) is a signal peptide. In terms of domain architecture, Ig-like C2-type spans 158-247 (PPLDCGEHHL…LKDQKGTALS (90 aa)). An intrachain disulfide couples Cys-179 to Cys-236. Residues 287 to 307 (SFLTVLILLTVLSITGSLIII) traverse the membrane as a helical segment.

Belongs to the Izumo family. In terms of assembly, forms a complex with tmem81 and spaca6 on spermatocyte cell membrane. The complex binds to oocyte protein bncr. In terms of tissue distribution, expressed in sperm.

The protein localises to the cell membrane. Its subcellular location is the cytoplasmic vesicle. The protein resides in the secretory vesicle. It is found in the acrosome membrane. In terms of biological role, essential sperm cell-surface protein required for fertilization by acting as a ligand for bncr receptor on egg. The interaction of the complex izumo1:spaca6:tmemt81 with bncr is a necessary adhesion event between sperm and egg that is required for fertilization. In Danio rerio (Zebrafish), this protein is Izumo sperm-egg fusion protein 1.